The sequence spans 144 residues: Superoxide dismutase [Mn], mitochondrial (144 aa).

Mn(2+) contacts are provided by His-10, His-58, and Asp-143.

This sequence belongs to the iron/manganese superoxide dismutase family. As to quaternary structure, homotetramer. Requires Mn(2+) as cofactor.

It localises to the mitochondrion matrix. It carries out the reaction 2 superoxide + 2 H(+) = H2O2 + O2. In terms of biological role, destroys superoxide anion radicals which are normally produced within the cells and which are toxic to biological systems. This is Superoxide dismutase [Mn], mitochondrial from Eptatretus stoutii (Pacific hagfish).